We begin with the raw amino-acid sequence, 242 residues long: ATP synthase subunit a (242 aa).

The next 5 membrane-spanning stretches (helical) occupy residues 21 to 41 (LASVLMVVITAILVFILAIVC), 83 to 103 (AVTLILFIFVANMLGLPFAIV), 118 to 137 (ATVTLTLSTTMILLTHYYGI), 175 to 195 (LYGNIFAGELLLGLLASLFFE), and 198 to 218 (AWGWIISIPGLIVWQAFSIFV).

Belongs to the ATPase A chain family. As to quaternary structure, F-type ATPases have 2 components, CF(1) - the catalytic core - and CF(0) - the membrane proton channel. CF(1) has five subunits: alpha(3), beta(3), gamma(1), delta(1), epsilon(1). CF(0) has three main subunits: a(1), b(2) and c(9-12). The alpha and beta chains form an alternating ring which encloses part of the gamma chain. CF(1) is attached to CF(0) by a central stalk formed by the gamma and epsilon chains, while a peripheral stalk is formed by the delta and b chains.

It is found in the cell membrane. In terms of biological role, key component of the proton channel; it plays a direct role in the translocation of protons across the membrane. The sequence is that of ATP synthase subunit a from Staphylococcus epidermidis (strain ATCC 35984 / DSM 28319 / BCRC 17069 / CCUG 31568 / BM 3577 / RP62A).